The primary structure comprises 259 residues: Isoprenyl transferase (259 aa).

Residue Asp33 is part of the active site. Asp33 provides a ligand contact to Mg(2+). Residues 34–37 (GNRR), Trp38, His51, and 79–81 (STE) contribute to the substrate site. The Proton acceptor role is filled by Asn82. Substrate-binding positions include Arg86, Arg208, and 214–216 (RMS). Glu227 is a Mg(2+) binding site.

This sequence belongs to the UPP synthase family. In terms of assembly, homodimer. Mg(2+) is required as a cofactor.

Catalyzes the condensation of isopentenyl diphosphate (IPP) with allylic pyrophosphates generating different type of terpenoids. The protein is Isoprenyl transferase of Streptomyces fradiae (Streptomyces roseoflavus).